Reading from the N-terminus, the 367-residue chain is Ganglioside-induced differentiation-associated protein 1-like 1 (367 aa).

One can recognise a GST N-terminal domain in the interval 45-126 (ESLVLYHWTQ…YVERTFTGEH (82 aa)). The GST C-terminal domain occupies 174–341 (PKYATAEIRR…RLVKRKPPSF (168 aa)).

It belongs to the GST superfamily.

This Homo sapiens (Human) protein is Ganglioside-induced differentiation-associated protein 1-like 1 (GDAP1L1).